A 190-amino-acid chain; its full sequence is Somatotropin (190 aa).

The N-terminal stretch at 1–17 is a signal peptide; that stretch reads MNRVILLLSVMCVGVSS. Cystine bridges form between Cys-69/Cys-163 and Cys-180/Cys-188.

Belongs to the somatotropin/prolactin family.

The protein localises to the secreted. Growth hormone plays an important role in growth control and is involved in the regulation of several anabolic processes. Implicated as an osmoregulatory substance important for seawater adaptation. This chain is Somatotropin (gh), found in Paralichthys olivaceus (Bastard halibut).